The following is a 596-amino-acid chain: Chloride intracellular channel protein 6 (596 aa).

Residues 1 to 360 (MAEATEPKEV…ALEEGDPGQE (360 aa)) form a disordered region. A compositionally biased stretch (basic and acidic residues) spans 34–48 (LEGREASEEAAEAPR). The residue at position 40 (Ser40) is a Phosphoserine. The span at 65 to 74 (GCGQDEGTGG) shows a compositional bias: gly residues. A compositionally biased stretch (low complexity) spans 83-98 (GPEAETPGASGAPGEA). The segment covering 118-130 (SAQQVQGMSSGLD) has biased composition (polar residues). The segment covering 148–160 (DPTASEAGEEAES) has biased composition (acidic residues). Low complexity-rich tracts occupy residues 197–213 (GSES…PQPQ) and 225–244 (GGNE…AGEG). Residues 246-290 (TLGKDGSEEAASEDARVDAHENGDQGKLQEETGEEEARPEPELKG) are compositionally biased toward basic and acidic residues. The residue at position 304 (Ser304) is a Phosphoserine. A compositionally biased stretch (basic and acidic residues) spans 338–348 (ELGRVNGRREN). Residues 379-382 (CPFS) carry the G-site motif. Residues 381 to 401 (FSQRLFMILWLKGVIFNVTTV) traverse the membrane as a helical segment. Positions 425 to 596 (DGEVKTDVNK…AYSDAAKRMK (172 aa)) constitute a GST C-terminal domain.

It belongs to the chloride channel CLIC family. In terms of assembly, monomer (soluble state). Interacts with dopamine receptors DRD2, DRD3 and DRD4. Phosphorylated.

The protein localises to the cytoplasm. Its subcellular location is the cell membrane. The enzyme catalyses chloride(in) = chloride(out). Its activity is regulated as follows. Channel activity is redox- and pH-regulated. Inhibited by IAA-94. In the soluble state, catalyzes glutaredoxin-like thiol disulfide exchange reactions with reduced glutathione as electron donor. Can insert into membranes and form voltage-dependent chloride-selective channels. The channel opens upon membrane depolarization at positive voltages and closes at negative membrane voltages. May play a critical role in water-secreting cells, possibly through the regulation of chloride ion transport. The sequence is that of Chloride intracellular channel protein 6 (Clic6) from Mus musculus (Mouse).